We begin with the raw amino-acid sequence, 300 residues long: Iodotyrosine deiodinase (300 aa).

Residues 15 to 31 traverse the membrane as a helical segment; the sequence is VGLISVSIAAGVALGQL. FMN is bound by residues 110–114, serine 138, and 138–139; these read RRSVR and SG. Residues alanine 140, glutamate 167, tyrosine 171, and lysine 192 each coordinate 3,5-diiodo-L-tyrosine. Residues alanine 140, glutamate 167, tyrosine 171, and lysine 192 each coordinate 3-iodo-L-tyrosine. Residues 247–249 and arginine 289 each bind FMN; that span reads TTT.

Belongs to the nitroreductase family. FMN is required as a cofactor. In terms of processing, may be cleaved at Gln-55. The cleaved form retains catalytic activity.

It is found in the membrane. It catalyses the reaction 2 iodide + L-tyrosine + 2 NADP(+) = 3,5-diiodo-L-tyrosine + 2 NADPH + H(+). It carries out the reaction iodide + L-tyrosine + NADP(+) = 3-iodo-L-tyrosine + NADPH. The catalysed reaction is 3-iodo-L-tyrosine + iodide + NADP(+) = 3,5-diiodo-L-tyrosine + NADPH + H(+). The enzyme catalyses L-tyrosine + chloride + NADP(+) = 3-chloro-L-tyrosine + NADPH. It catalyses the reaction bromide + L-tyrosine + NADP(+) = 3-bromo-L-tyrosine + NADPH. Its function is as follows. Catalyzes the dehalogenation of halotyrosines such as 3,5-diiodo-L-tyrosine. Likely to also catalyze the dehalogenation of other halotyrosines such as 3-bromo-L-tyrosine, 3-chloro-L-tyrosine and 3-iodo-L-tyrosine. The sequence is that of Iodotyrosine deiodinase from Daphnia pulex (Water flea).